The sequence spans 543 residues: Chaperonin GroEL 1 (543 aa).

Residues 29-32 (TLGP), 86-90 (DGTTT), Gly413, 479-481 (NAA), and Asp495 each bind ATP. The segment at 524-543 (PEPKDAAPAGVGGGGGDFDY) is disordered. Over residues 533–543 (GVGGGGGDFDY) the composition is skewed to gly residues.

It belongs to the chaperonin (HSP60) family. Forms a cylinder of 14 subunits composed of two heptameric rings stacked back-to-back. Interacts with the co-chaperonin GroES.

It localises to the cytoplasm. It carries out the reaction ATP + H2O + a folded polypeptide = ADP + phosphate + an unfolded polypeptide.. Functionally, together with its co-chaperonin GroES, plays an essential role in assisting protein folding. The GroEL-GroES system forms a nano-cage that allows encapsulation of the non-native substrate proteins and provides a physical environment optimized to promote and accelerate protein folding. In Anabaena sp. (strain L31), this protein is Chaperonin GroEL 1.